The sequence spans 211 residues: Ribosomal RNA small subunit methyltransferase G (211 aa).

Residues Gly74, Leu79, 125 to 126 (AE), and Arg140 each bind S-adenosyl-L-methionine.

This sequence belongs to the methyltransferase superfamily. RNA methyltransferase RsmG family.

It is found in the cytoplasm. In terms of biological role, specifically methylates the N7 position of guanine in position 518 of 16S rRNA. This is Ribosomal RNA small subunit methyltransferase G from Clavibacter michiganensis subsp. michiganensis (strain NCPPB 382).